Consider the following 241-residue polypeptide: MIILSTNDNLTNPYEIARYIKEAKKSTPVRAYIQGNIEIEETEELEVYGCDNFKIVFGELEVVEKLLEINKDKIKHYRLEYDRRNSAIPLLDIKHLDARIEPGAIIRDKVKIGKNAVIMMGAVINIGAEIGENSMIDMNAVIGARGIIGKNVHVGAGAVIAGVLEPPSSVPVVLEDNVLVGANAVILEGVRVGHGAVVAAGSVVTEDVPPNTVVAGVPAKIVKIVDDKTREKTKLMEDLRG.

It belongs to the transferase hexapeptide repeat family. DapH subfamily.

The enzyme catalyses (S)-2,3,4,5-tetrahydrodipicolinate + acetyl-CoA + H2O = L-2-acetamido-6-oxoheptanedioate + CoA. It participates in amino-acid biosynthesis; L-lysine biosynthesis via DAP pathway; LL-2,6-diaminopimelate from (S)-tetrahydrodipicolinate (acetylase route): step 1/3. In terms of biological role, catalyzes the transfer of an acetyl group from acetyl-CoA to tetrahydrodipicolinate. The sequence is that of 2,3,4,5-tetrahydropyridine-2,6-dicarboxylate N-acetyltransferase from Thermoanaerobacter pseudethanolicus (strain ATCC 33223 / 39E) (Clostridium thermohydrosulfuricum).